The sequence spans 123 residues: MIQEQTMLNVADNSGARRVMCIKVLGGSHRRYAGVGDIIKITIKEAIPRGKVKKGDVLKPVVVRTNKGVRRPDGSVIRFDGNACVLLNNNSEQPIGTRIFGPVTRELRSEKFMKIISLAPEVL.

It belongs to the universal ribosomal protein uL14 family. Part of the 50S ribosomal subunit. Forms a cluster with proteins L3 and L19. In the 70S ribosome, L14 and L19 interact and together make contacts with the 16S rRNA in bridges B5 and B8.

In terms of biological role, binds to 23S rRNA. Forms part of two intersubunit bridges in the 70S ribosome. In Escherichia coli O6:K15:H31 (strain 536 / UPEC), this protein is Large ribosomal subunit protein uL14.